Reading from the N-terminus, the 421-residue chain is Ankyrin repeat and SOCS box protein 6 (421 aa).

ANK repeat units follow at residues 67-97, 102-131, 136-166, 170-205, 226-255, and 260-289; these read EGVSNALLKMAELGLTRAADVLLRHGANLNF, TYYTALHIAVLRNQPDMVELLVHHGADVNR, HESSPLDLASEEPERLPCLQRLLDLGADVNA, HGKTALLHALASSDGVQIHNTENIRLLLEGGADVKA, GGDKEEAQMINRFCFQVTRLLLAHGADPSE, and ESLTHICLKSFKLHFPLLRFLLESGAAYNC. Residues 360–415 enclose the SOCS box domain; that stretch reads ALHFSLRQLESYPPPLKHLCRVAIRLYLQPWPVDVKVKALPLPDRLKWYLLSEHSG.

The protein belongs to the ankyrin SOCS box (ASB) family. In terms of assembly, binds APS. Identified in a complex with ELOB and ELOC. Interacts with CUL5 and RNF7. Interacts with SQSTM1. In terms of processing, ubiquitinated by RNF41; leading to proteasomal degradation.

Its subcellular location is the cytoplasm. It functions in the pathway protein modification; protein ubiquitination. Probable substrate-recognition component of a SCF-like ECS (Elongin-Cullin-SOCS-box protein) E3 ubiquitin-protein ligase complex which mediates the ubiquitination and subsequent proteasomal degradation of target proteins. May play a role in the regulation of cell proliferation and autophagy by promoting the ubiquitination and degradation of SQSTM1. In Homo sapiens (Human), this protein is Ankyrin repeat and SOCS box protein 6 (ASB6).